A 764-amino-acid polypeptide reads, in one-letter code: ATP-dependent DNA helicase DDM1 (764 aa).

Residues 1 to 42 are disordered; that stretch reads MVSLRSRKVIPASEMVSDGKTEKDASGDSPTSVLNEEENCEE. Over residues 17–26 the composition is skewed to basic and acidic residues; it reads SDGKTEKDAS. Residues 62–88 adopt a coiled-coil conformation; that stretch reads LISEAMAQEEEQLLKLREDEEKANNAG. The segment at 129 to 152 is disordered; it reads IESESQKAEPEKTGRGRKRKAASQ. A compositionally biased stretch (basic and acidic residues) spans 132-142; that stretch reads ESQKAEPEKTG. The Nuclear localization signal 1 signature appears at 145 to 152; sequence RKRKAASQ. Residues 214-382 enclose the Helicase ATP-binding domain; the sequence is ISLWQNGLNG…WSLLNFILPD (169 aa). 227-234 provides a ligand contact to ATP; it reads DQMGLGKT. A DEAH box motif is present at residues 333–336; the sequence is DEGH. The short motif at 429 to 436 is the Nuclear localization signal 2 element; that stretch reads LRRMKCDV. Residues 528 to 695 form the Helicase C-terminal domain; the sequence is LLERLLVRLF…STPLEEEDIL (168 aa).

This sequence belongs to the SNF2/RAD54 helicase family. In terms of assembly, interacts with the MBD domains of MBD2, MBD5 and MBD6.

The protein resides in the nucleus. The enzyme catalyses ATP + H2O = ADP + phosphate + H(+). ATPase activity is stimulated 3-fold by DNA (both free and nucleosomal) binding. In terms of biological role, ATP-dependent DNA helicase that plays a role in formation, organization, stability and heritability of heterochromatin and thus regulates several physiological traits. Binds to the nucleosome and promotes chromatin remodeling in an ATP-dependent manner; induces nucleosome repositioning on a short DNA fragment, and, possibly, could be guided to target sites (including silent transposable elements) by small interfering RNAs (siRNAs). Can bind both free and nucleosomal DNA. Required for the heritable maintenance of genome integrity and transcriptional gene silencing (TGS), including homology-dependent gene silencing (HDG silencing), via the maintenance of DNA methylation (mostly on cytosine, in both CpG and CpHpG sites, where H is A, T or C) and of histone methylation (e.g. chromatin methylation). May facilitate localization of MBD proteins at specific nuclear domains. Necessary for the maintenance of the genomic imprint at the MEA locus, especially for the silencing of paternally inherited MEA locus. Plays a major role in the inactivation maintenance of retrotransposons (e.g. Tar17, SINE, LINE, ATLN39, CAC1 (CACTAs), Athila elements, and mutator-like elements MULEs and TIR-MULEs) and the silencing of repeated genes and transgenes (e.g. T-DNA insertions). Required for KYP-dependent histone H3 'Lys-9' (H3K9me) methylation, deacetylation of histone H4 'Lys-16' (H4K16) and MET1-dependent DNA methylation. Involved in the chromatin organization of 5S rRNA genes (localized in the pericentromeric heterochromatin of chromosomes 3, 4, and 5) modifications during heterochromatin establishment. Prevents siRNA accumulation (siRNA are probably involved in epigenetic inheritance and in 5S rRNA genes regulation by silencing). Required during plant organogenesis and development, as well as during seed formation. In Arabidopsis thaliana (Mouse-ear cress), this protein is ATP-dependent DNA helicase DDM1 (DDM1).